The sequence spans 428 residues: uncharacterized protein (428 aa).

H68 contacts Zn(2+). The active-site Proton acceptor is E71. Zn(2+)-binding residues include H72 and E143.

This sequence belongs to the peptidase M16 family. Zn(2+) serves as cofactor.

This is an uncharacterized protein from Bacillus subtilis (strain 168).